Reading from the N-terminus, the 737-residue chain is MPLNRTLSMSSLPGLEDWEDEFDLENTVLFEVAWEVANKVGGIYTVLQTKAKVTGDEWGDNYYLVGPYTEQGVRTQVELLEAPTPALKKTLDSMNSKGCKVYFGRWLIEGGPLVVLLDVGASAWALERWKGELWDTCNIGVPWYDREANDAVLFGFLTTWFLGEFLAQSEEKPHVVAHFHEWLAGIGLCLCRARRLPVATIFTTHATLLGRYLCAGAVDFYNNLENFNVDKEAGERQIYHRYCMERAAAHCAHVFTTVSQITAIEAQHLLKRKPDIVTPNGLNVKKFSAMHEFQNLHAQSKARIQEFVRGHFYGHLDFNLDKTLYFFIAGRYEFSNKGADVFLEALARLNYLLRVNGSEQTVVALFIMPARTNNFNVETLKGQAVRKQLWDTANTVKEKFGRKLYESLLVGSLPDMNKMLDKEDFTMMKRAIFATQRQSFPPVCTHNMLDDSSDPILTTIRRIGLFNSSADRVKVIFHPEFLSSTSPLLPVDYEEFVRGCHLGVFPSYYEPWGYTPAECTVMGIPSISTNLSGFGCFMEEHIADPSAYGIYILDRRFRSLDDSCSQLTSFLYSFCQQSRRQRIIQRNRTERLSDLLDWKYLGRYYMSARHMALSKAFPEHFTYEPSEADAAQGYRYPRPASVPPSPSLSRHSSPHQSEDEEDPRNGPLEEDSERYDEDEEAAKDRRNIRAPEWPRRASCTSSTSGSKRNSVDTATSSSLSTPSEPLSPTSSLGEERN.

The residue at position 8 (S8) is a Phosphoserine; by AMPK and PKA. S11 bears the Phosphoserine mark. A UDP-binding site is contributed by K39. 2 residues coordinate UDP-alpha-D-glucose: H205 and R211. Residues H291, E292, Q294, H297, and K301 each contribute to the alpha-D-glucose 6-phosphate site. R331 is a binding site for UDP. A UDP-alpha-D-glucose-binding site is contributed by R331. A Phosphoserine modification is found at S412. Position 501 (H501) interacts with alpha-D-glucose 6-phosphate. Residues E510, W512, and G513 each coordinate UDP-alpha-D-glucose. T515 contributes to the UDP binding site. Alpha-D-glucose 6-phosphate contacts are provided by R582 and R586. Positions 634–737 (YRYPRPASVP…PTSSLGEERN (104 aa)) are disordered. Residue S641 is modified to Phosphoserine; by DYRK2, GSK3-alpha, GSK3-beta and PASK. Phosphoserine; by GSK3-alpha and GSK3-beta occurs at positions 645 and 649. S652 is subject to Phosphoserine. S653 is subject to Phosphoserine; by GSK3-alpha and GSK3-beta. At S657 the chain carries Phosphoserine; by CK2. Residues 658–681 (EDEEDPRNGPLEEDSERYDEDEEA) show a composition bias toward acidic residues. S672 carries the phosphoserine modification. Residues 682–695 (AKDRRNIRAPEWPR) are compositionally biased toward basic and acidic residues. S698 carries the post-translational modification Phosphoserine. The span at 698-714 (SCTSSTSGSKRNSVDTA) shows a compositional bias: polar residues. Position 700 is a phosphothreonine (T700). S710 carries the post-translational modification Phosphoserine. Low complexity predominate over residues 715–737 (TSSSLSTPSEPLSPTSSLGEERN). Position 721 is a phosphothreonine (T721). A phosphoserine mark is found at S727 and S731.

Belongs to the glycosyltransferase 3 family. As to quaternary structure, part of the GYS1-GYG1 complex, a heterooctamer composed of a tetramer of GYS1 and 2 dimers of GYG1, where each GYS1 protomer binds to one GYG1 subunit (via GYG1 C-terminus); the GYS1 tetramer may dissociate from GYG1 dimers to continue glycogen polymerization on its own. Phosphorylation at Ser-8 by AMPK inactivates the enzyme activity. Primed phosphorylation at Ser-657 (site 5) by CSNK2A1 and CSNK2A2 is required for inhibitory phosphorylation at Ser-641 (site 3a), Ser-645 (site 3b), Ser-649 (site 3c) and Ser-653 (site 4) by GSK3A an GSK3B. Phosphorylated at Ser-641 by PASK, leading to inactivation; phosphorylation by PASK is inhibited by glycogen. Phosphorylated at Ser-641 by DYRK2, leading to inactivation. Dephosphorylation at Ser-641 and Ser-645 by PP1 activates the enzyme.

It catalyses the reaction [(1-&gt;4)-alpha-D-glucosyl](n) + UDP-alpha-D-glucose = [(1-&gt;4)-alpha-D-glucosyl](n+1) + UDP + H(+). It participates in glycan biosynthesis; glycogen biosynthesis. With respect to regulation, allosteric activation by glucose-6-phosphate. Phosphorylation reduces the activity towards UDP-glucose. When in the non-phosphorylated state, glycogen synthase does not require glucose-6-phosphate as an allosteric activator; when phosphorylated it does. Glycogen synthase participates in the glycogen biosynthetic process along with glycogenin and glycogen branching enzyme. Extends the primer composed of a few glucose units formed by glycogenin by adding new glucose units to it. In this context, glycogen synthase transfers the glycosyl residue from UDP-Glc to the non-reducing end of alpha-1,4-glucan. This chain is Glycogen [starch] synthase, muscle (GYS1), found in Macaca mulatta (Rhesus macaque).